Here is a 410-residue protein sequence, read N- to C-terminus: Kynureninase (410 aa).

Residues T108, S109, 135–138 (FPTD), T176, D205, H208, and Y230 contribute to the pyridoxal 5'-phosphate site. K231 bears the N6-(pyridoxal phosphate)lysine mark. 2 residues coordinate pyridoxal 5'-phosphate: W260 and T286.

This sequence belongs to the kynureninase family. Homodimer. Pyridoxal 5'-phosphate is required as a cofactor.

The enzyme catalyses L-kynurenine + H2O = anthranilate + L-alanine + H(+). It carries out the reaction 3-hydroxy-L-kynurenine + H2O = 3-hydroxyanthranilate + L-alanine + H(+). The protein operates within amino-acid degradation; L-kynurenine degradation; L-alanine and anthranilate from L-kynurenine: step 1/1. Its pathway is cofactor biosynthesis; NAD(+) biosynthesis; quinolinate from L-kynurenine: step 2/3. In terms of biological role, catalyzes the cleavage of L-kynurenine (L-Kyn) and L-3-hydroxykynurenine (L-3OHKyn) into anthranilic acid (AA) and 3-hydroxyanthranilic acid (3-OHAA), respectively. The protein is Kynureninase of Deinococcus radiodurans (strain ATCC 13939 / DSM 20539 / JCM 16871 / CCUG 27074 / LMG 4051 / NBRC 15346 / NCIMB 9279 / VKM B-1422 / R1).